We begin with the raw amino-acid sequence, 682 residues long: Potassium-transporting ATPase ATP-binding subunit (682 aa).

4 consecutive transmembrane segments (helical) span residues Pro-34 to Val-54, Ala-62 to Ala-82, Ile-219 to Leu-239, and Val-254 to Ile-274. The active-site 4-aspartylphosphate intermediate is Asp-307. Residues Asp-344, Glu-348, Phe-377–Ser-384, and Lys-395 contribute to the ATP site. Residues Asp-518 and Asp-522 each coordinate Mg(2+). 3 consecutive transmembrane segments (helical) span residues Phe-588–Met-608, Ala-616–Leu-636, and Leu-662–Ala-682.

This sequence belongs to the cation transport ATPase (P-type) (TC 3.A.3) family. Type IA subfamily. As to quaternary structure, the system is composed of three essential subunits: KdpA, KdpB and KdpC.

It is found in the cell inner membrane. The catalysed reaction is K(+)(out) + ATP + H2O = K(+)(in) + ADP + phosphate + H(+). Functionally, part of the high-affinity ATP-driven potassium transport (or Kdp) system, which catalyzes the hydrolysis of ATP coupled with the electrogenic transport of potassium into the cytoplasm. This subunit is responsible for energy coupling to the transport system and for the release of the potassium ions to the cytoplasm. The sequence is that of Potassium-transporting ATPase ATP-binding subunit from Salmonella schwarzengrund (strain CVM19633).